The chain runs to 437 residues: Proline--tRNA ligase (437 aa).

It belongs to the class-II aminoacyl-tRNA synthetase family. ProS type 2 subfamily. Homodimer.

It is found in the cytoplasm. It carries out the reaction tRNA(Pro) + L-proline + ATP = L-prolyl-tRNA(Pro) + AMP + diphosphate. Catalyzes the attachment of proline to tRNA(Pro) in a two-step reaction: proline is first activated by ATP to form Pro-AMP and then transferred to the acceptor end of tRNA(Pro). This chain is Proline--tRNA ligase, found in Acidiphilium cryptum (strain JF-5).